The chain runs to 281 residues: Tryptophan 2,3-dioxygenase (281 aa).

Substrate-binding positions include 50 to 54, Tyr112, and Arg116; that span reads FIIQH. His239 is a heme binding site. Thr253 serves as a coordination point for substrate.

This sequence belongs to the tryptophan 2,3-dioxygenase family. Homotetramer. Heme serves as cofactor.

The enzyme catalyses L-tryptophan + O2 = N-formyl-L-kynurenine. Its pathway is amino-acid degradation; L-tryptophan degradation via kynurenine pathway; L-kynurenine from L-tryptophan: step 1/2. Its function is as follows. Heme-dependent dioxygenase that catalyzes the oxidative cleavage of the L-tryptophan (L-Trp) pyrrole ring and converts L-tryptophan to N-formyl-L-kynurenine. Catalyzes the oxidative cleavage of the indole moiety. The protein is Tryptophan 2,3-dioxygenase of Saccharopolyspora erythraea (strain ATCC 11635 / DSM 40517 / JCM 4748 / NBRC 13426 / NCIMB 8594 / NRRL 2338).